A 353-amino-acid polypeptide reads, in one-letter code: MLCTLFLLLLALGIVQTTRPCFPGCQCEEETFGLFDSFSLIRVDCSSLGPHIVPVPIPLDTAHLDLSSNRLETVNESVLGGPGYTTLAGLDLSHNLLTSITPTAFSRLRYLESLDLSHNGLAALPAEVFTSSPLSDINLSHNRLREVSISAFTTHSQGRALHVDLSHNLIHRLLPYPARASLSAPTIQSLNLSWNRLRAVPDLRDLPLRYLSLDGNPLATINPGAFMGLAGLTHLSLASLQGILQLPPHGFRELPGLQVLDLSGNPKLKWAGAEVFSGLGLLQELDLSGSSLVPLPETLLHHLPALQSVSVGQDVQCRRLVREGAYHRQPGSSPKVVLHCGDTQESARGPDIL.

The signal sequence occupies residues 1-17; sequence MLCTLFLLLLALGIVQT. Residues 18 to 59 form the LRRNT domain; sequence TRPCFPGCQCEEETFGLFDSFSLIRVDCSSLGPHIVPVPIPL. LRR repeat units lie at residues 60-80, 86-107, 110-131, 133-154, 160-180, 186-207, 208-228, 231-253, 256-277, and 281-302; these read DTAH…SVLG, TLAG…AFSR, YLES…VFTS, PLSD…AFTT, ALHV…PARA, TIQS…RDLP, LRYL…AFMG, GLTH…GFRE, GLQV…EVFS, and LLQE…LLHH. Asn-75 is a glycosylation site (N-linked (GlcNAc...) asparagine). A glycan (N-linked (GlcNAc...) asparagine) is linked at Asn-138. Residue Asn-191 is glycosylated (N-linked (GlcNAc...) asparagine).

Interacts with FZD4 (via FZ domain); competes with WNT2B for binding to FZD4, inhibiting Wnt signaling and repressing peripheral eye development. Interacts with TGFB1; the interaction contributes to regulation of the hair cycle. Interacts with netrin. Interacts with CCN2. As to expression, expressed at high levels in the liver, small intestine and placenta. Not or barely detectable in other tissues, including whole pancreas, adipose tissues, skeletal muscle, kidney, spleen, brain, lung and testis.

It localises to the secreted. Contributes to various developmental events and other processes such as wound healing and cholesterol homeostasis through its interactions with multiple signaling pathways. Wnt signaling inhibitor which competes with WNT2B for binding to Wnt receptor FZD4 and represses WNT2B-dependent development of the peripheral eye. Plays a role in regulating the hair cycle by controlling TGFB1 signaling. Required for the development of the anterior commissure in the brain by inhibiting neurite outgrowth. Essential for terminal differentiation of hippocampal neural stem cells. Plays a role in regulating bone elongation and bone mass by modulating growth plate chondrocyte function and overall body size. Required for development of the inner ear through its involvement in stereocilia formation in inner hair cells. Facilitates wound healing by inhibiting secretion of TGFB1 from macrophages which prevents myofibroblast differentiation, maintaining inflammatory cell quiescence. Plays a role in cholesterol homeostasis by reducing circulating high-density lipoprotein cholesterol, lowering cholesterol efflux capacity and decreasing cholesterol-to-bile acid conversion in the liver. In one study, shown to negatively regulate sympathetic innervation in brown fat, leading to reduced energy expenditure. In another study, shown not to affect brown fat thermogenic capacity, body weight gain or glucose homeostasis. The protein is Tsukushi (Tsku) of Rattus norvegicus (Rat).